The primary structure comprises 279 residues: Ribosomal RNA small subunit methyltransferase A (279 aa).

Residues histidine 10, leucine 12, glycine 37, glutamate 58, aspartate 83, and asparagine 108 each coordinate S-adenosyl-L-methionine.

This sequence belongs to the class I-like SAM-binding methyltransferase superfamily. rRNA adenine N(6)-methyltransferase family. RsmA subfamily.

The protein resides in the cytoplasm. The enzyme catalyses adenosine(1518)/adenosine(1519) in 16S rRNA + 4 S-adenosyl-L-methionine = N(6)-dimethyladenosine(1518)/N(6)-dimethyladenosine(1519) in 16S rRNA + 4 S-adenosyl-L-homocysteine + 4 H(+). In terms of biological role, specifically dimethylates two adjacent adenosines (A1518 and A1519) in the loop of a conserved hairpin near the 3'-end of 16S rRNA in the 30S particle. May play a critical role in biogenesis of 30S subunits. In Synechococcus elongatus (strain ATCC 33912 / PCC 7942 / FACHB-805) (Anacystis nidulans R2), this protein is Ribosomal RNA small subunit methyltransferase A.